Here is a 232-residue protein sequence, read N- to C-terminus: MTMTITVSIFGQFFPETLLFIPMNLFSIVFALSWIAFIYPTNWAPSRFQSIWASFRANVLEMIFQNTSPNTAPWAGLITTVFIVILSANVLGLFPYAFTATSHISLTYSLGFPIWMAVNILGFYLAFNSRLSHLVPQGTPSALIPLMVWIETLSLFAQPIALGLRLAANLTAGHLLIFLLSTAIWLLSSSLMVSSIPIFVIFVLLFILEIGVACIEAYVFTALVHFYLQQNV.

Transmembrane regions (helical) follow at residues 18 to 38 (LLFIPMNLFSIVFALSWIAFI), 74 to 94 (WAGLITTVFIVILSANVLGLF), 107 to 127 (TYSLGFPIWMAVNILGFYLAF), 142 to 162 (ALIPLMVWIETLSLFAQPIAL), 173 to 193 (GHLLIFLLSTAIWLLSSSLMV), and 195 to 215 (SIPIFVIFVLLFILEIGVACI).

The protein belongs to the ATPase A chain family. In terms of assembly, F-type ATPases have 2 components, CF(1) - the catalytic core - and CF(0) - the membrane proton channel. CF(1) has five subunits: alpha(3), beta(3), gamma(1), delta(1), epsilon(1). CF(0) has three main subunits: a, b and c.

Its subcellular location is the mitochondrion inner membrane. In terms of biological role, mitochondrial membrane ATP synthase (F(1)F(0) ATP synthase or Complex V) produces ATP from ADP in the presence of a proton gradient across the membrane which is generated by electron transport complexes of the respiratory chain. F-type ATPases consist of two structural domains, F(1) - containing the extramembraneous catalytic core and F(0) - containing the membrane proton channel, linked together by a central stalk and a peripheral stalk. During catalysis, ATP synthesis in the catalytic domain of F(1) is coupled via a rotary mechanism of the central stalk subunits to proton translocation. Key component of the proton channel; it may play a direct role in the translocation of protons across the membrane. This is ATP synthase subunit a (ATP6) from Paracentrotus lividus (Common sea urchin).